The following is a 940-amino-acid chain: Antiviral innate immune response receptor RIG-I (940 aa).

CARD domains lie at 1–87 (MTAE…GLCE) and 92–172 (WDFQ…KTLK). Residues Lys48, Lys96, Lys154, Lys164, Lys172, and Lys190 each participate in a glycyl lysine isopeptide (Lys-Gly) (interchain with G-Cter in ubiquitin) cross-link. The segment at 219–928 (ENQNLSQNSC…LSFDAAEMAG (710 aa)) is interaction with ZC3HAV1. The Helicase ATP-binding domain occupies 249–428 (ALPAQNGKNT…AEATEYICKL (180 aa)). 262–269 (APTGCGKT) provides a ligand contact to ATP. A DECH box motif is present at residues 370-373 (DECH). The 167-residue stretch at 613 to 779 (KLRDLCFILQ…ILQTWDEAVF (167 aa)) folds into the Helicase C-terminal domain. The tract at residues 738 to 928 (GSKCFLLTAN…LSFDAAEMAG (191 aa)) is mediates interaction with RNF135. At Thr773 the chain carries Phosphothreonine; by CK2. The RLR CTR domain maps to 795–928 (DNQGKPEPVP…LSFDAAEMAG (134 aa)). A Zn(2+)-binding site is contributed by Cys813. Residue Lys815 forms a Glycyl lysine isopeptide (Lys-Gly) (interchain with G-Cter in ubiquitin) linkage. Cys816 contacts Zn(2+). Lys861 carries the post-translational modification N6-acetyllysine. Residues Cys867 and Cys872 each contribute to the Zn(2+) site. The residue at position 912 (Lys912) is an N6-acetyllysine.

The protein belongs to the helicase family. RLR subfamily. Monomer; maintained as a monomer in an autoinhibited state. Upon binding of viral RNAs and conformational shift, homooligomerizes and forms filaments on these molecules. Interacts (via tandem CARD domain) with MAVS/IPS1 promoting its filamentation. Interacts with DHX58/LGP2, IKBKE, TBK1 and STING1. Interacts (via CARD domain) with TRIM25 (via SPRY domain). Interacts (double-stranded RNA-bound oligomeric form) with RNF135 (homodimer); involved in RNA length-dependent activation of the RIG-I signaling pathway. Interacts with CYLD. Interacts with NLRC5; blocks the interaction of MAVS/IPS1 to RIGI. Interacts with SRC. Interacts with DDX60. Interacts with ZC3HAV1 (via zinc-fingers) in an RNA-dependent manner. Interacts (via tandem CARD domain) with SEC14L1; the interaction is direct and impairs the interaction of RIGI with MAVS/IPS1. Interacts with VCP/p97; interaction is direct and allows the recruitment of RNF125 and subsequent ubiquitination and degradation. Interacts with NOP53; may regulate RIGI through USP15-mediated 'Lys-63'-linked deubiquitination. Interacts with SIGLEC10, CBL and PTPN11; within a negative feedback loop leading to RIGI degradation. Interacts with LRRC25. Interacts with ZCCHC3; leading to activation of RIGI. Interacts with RNF123. Interacts with UBE2D3 and UBE2N; E2 ubiquitin ligases involved in RNF135-mediated ubiquitination of RIGI and activation of the RIG-I signaling pathway. Interacts with IFIT3. Interacts with DDX3X. Interacts with RTN3. Interacts with ARL16; this interaction is GTP-dependent and induced upon viral infection; this interaction suppresses the RNA sensing activity of RIGI. Interacts with DHX16; this interaction enhances RIGI-mediated antiviral response. Interacts with IRGM; promoting RIGI degradation. Interacts with IFI6; this interaction inhibits RIGI activation. Interacts with ECSIT; this interaction bridges RIGI to the MAVS complex at the mitochondrion. Interacts with YWHAE; this interaction drives RIGI at the mitochondrion. In terms of processing, phosphorylated in resting cells and dephosphorylated in RNA virus-infected cells. Phosphorylation at Thr-773 results in inhibition of its activity while dephosphorylation at these sites results in its activation. Post-translationally, ISGylated. Conjugated to ubiquitin-like protein ISG15 upon IFN-beta stimulation. ISGylation negatively regulates its function in antiviral signaling response. Sumoylated, probably by MUL1; inhibiting its polyubiquitination. In terms of processing, acetylated in response to RNA virus infection. Deacetylated by HDAC6 in the presence of viral mRNAs which is required for detection of viral RNA by RIGI. Post-translationally, ubiquitinated. 'Lys-63' ubiquitination by RNF135, which occurs after RNA-binding and homodimerization, releases the autoinhibition of the CARD domains by the RLR CTR domain, an essential step in the activation of the RIG-I signaling pathway. Also ubiquitinated by TRIM4. Also undergoes 'Lys-48' ubiquitination by RNF125 that leads to proteasomal degradation. 'Lys-48' ubiquitination follows viral infection and is enhanced by 'Lys-63'-linked ubiquitination of the CARD domains that promotes interaction with VCP/p97 and subsequent recruitment of RNF125. Within a negative feedback loop involving SIGLEC10 and PTPN11, 'Lys-48' ubiquitination at Lys-815 by CBL also elicits the proteasomal degradation of RIGI. Deubiquitinated by CYLD, a protease that selectively cleaves 'Lys-63'-linked ubiquitin chains. Also probably deubiquitinated by USP17L2/USP17 that cleaves 'Lys-48'- and 'Lys-63'-linked ubiquitin chains and positively regulates the receptor. Ubiquitinated by TRIM40 via 'Lys-48'-linked ubiquitination; leading to proteasomal degradation. Deubiquitinated by USP27X that cleaves 'Lys-63'-linked ubiquitin chains and inhibits the innate immune receptor activity. Deubiquitinated by USP3 that also cleaves 'Lys-63'-linked ubiquitin chains and inhibits the innate immune receptor activity. Degraded via selective autophagy following interaction with IRGM. IRGM promotes RIGI recruitment to autophagosome membranes, promoting its SQSTM1/p62-dependent autophagic degradation. Ubiquitously expressed, with highest levels in spleen, liver, intestine and heart. Up-regulated in tracheobronchial lymph node and tonsils during porcine reproductive and respiratory syndrome virus (PRRSV) infection.

Its subcellular location is the cytoplasm. It localises to the cell projection. It is found in the ruffle membrane. The protein localises to the cytoskeleton. The protein resides in the cell junction. Its subcellular location is the tight junction. It catalyses the reaction ATP + H2O = ADP + phosphate + H(+). Innate immune receptor that senses cytoplasmic viral nucleic acids and activates a downstream signaling cascade leading to the production of type I interferons and pro-inflammatory cytokines. Forms a ribonucleoprotein complex with viral RNAs on which it homooligomerizes to form filaments. The homooligomerization allows the recruitment of RNF135 an E3 ubiquitin-protein ligase that activates and amplifies the RIG-I-mediated antiviral signaling in an RNA length-dependent manner through ubiquitination-dependent and -independent mechanisms. Upon activation, associates with mitochondria antiviral signaling protein (MAVS/IPS1) that activates the IKK-related kinases TBK1 and IKBKE which in turn phosphorylate the interferon regulatory factors IRF3 and IRF7, activating transcription of antiviral immunological genes including the IFN-alpha and IFN-beta interferons. Ligands include: 5'-triphosphorylated ssRNA and dsRNA and short dsRNA (&lt;1 kb in length). In addition to the 5'-triphosphate moiety, blunt-end base pairing at the 5'-end of the RNA is very essential. Overhangs at the non-triphosphorylated end of the dsRNA RNA have no major impact on its activity. A 3'overhang at the 5'triphosphate end decreases and any 5'overhang at the 5' triphosphate end abolishes its activity. Detects both positive and negative strand RNA viruses including members of the families Paramyxoviridae, Rhabdoviridae: vesicular stomatitis virus (VSV) Orthomyxoviridae: influenza A and B virus, Flaviviridae: Japanese encephalitis virus (JEV). It also detects rotavirus and reovirus. Also involved in antiviral signaling in response to viruses containing a dsDNA genome. Detects dsRNA produced from non-self dsDNA by RNA polymerase III. May play important roles in granulocyte production and differentiation, bacterial phagocytosis and in the regulation of cell migration. This Sus scrofa (Pig) protein is Antiviral innate immune response receptor RIG-I.